We begin with the raw amino-acid sequence, 78 residues long: Large ribosomal subunit protein bL28 (78 aa).

Residues 1 to 21 are disordered; it reads MSRVCQLSGKRANNGMAVSHS.

It belongs to the bacterial ribosomal protein bL28 family.

This is Large ribosomal subunit protein bL28 from Synechococcus sp. (strain RCC307).